We begin with the raw amino-acid sequence, 219 residues long: 16S rRNA (adenine(1408)-N(1))-methyltransferase (219 aa).

S-adenosyl-L-methionine-binding positions include Gly-32, Asn-38, Asp-55, 87–88 (AE), 104–109 (LFPWGT), and 195–197 (SLW).

It belongs to the methyltransferase superfamily. Kanamycin-apramycin resistance family.

The catalysed reaction is adenosine(1408) in 16S rRNA + S-adenosyl-L-methionine = N(1)-methyladenosine(1408) in 16S rRNA + S-adenosyl-L-homocysteine + H(+). Specifically methylates the N(1) position of adenine 1408 in 16S rRNA. Confers resistance to various aminoglycosides, including kanamycin, neomycin, apramycin, ribostamycin and gentamicin. Methylates only fully assembled 30S subunits. The chain is 16S rRNA (adenine(1408)-N(1))-methyltransferase (npmA) from Escherichia coli.